The sequence spans 290 residues: ATP synthase gamma chain (290 aa).

This sequence belongs to the ATPase gamma chain family. F-type ATPases have 2 components, CF(1) - the catalytic core - and CF(0) - the membrane proton channel. CF(1) has five subunits: alpha(3), beta(3), gamma(1), delta(1), epsilon(1). CF(0) has three main subunits: a, b and c.

The protein resides in the cell inner membrane. Its function is as follows. Produces ATP from ADP in the presence of a proton gradient across the membrane. The gamma chain is believed to be important in regulating ATPase activity and the flow of protons through the CF(0) complex. This Delftia acidovorans (strain DSM 14801 / SPH-1) protein is ATP synthase gamma chain.